The chain runs to 88 residues: uncharacterized protein (88 aa).

Residues 1-54 (AVDAYDDDDNLKNEEGDYYNESDDGYSGDEEEEEKQEEDEQDDDDLQFDDGVPE) are disordered. Acidic residues predominate over residues 16–53 (GDYYNESDDGYSGDEEEEEKQEEDEQDDDDLQFDDGVP).

Predominantly in developing fruit.

This is an uncharacterized protein from Fragaria ananassa (Strawberry).